Reading from the N-terminus, the 94-residue chain is Co-chaperonin GroES (94 aa).

It belongs to the GroES chaperonin family. In terms of assembly, heptamer of 7 subunits arranged in a ring. Interacts with the chaperonin GroEL.

It is found in the cytoplasm. Together with the chaperonin GroEL, plays an essential role in assisting protein folding. The GroEL-GroES system forms a nano-cage that allows encapsulation of the non-native substrate proteins and provides a physical environment optimized to promote and accelerate protein folding. GroES binds to the apical surface of the GroEL ring, thereby capping the opening of the GroEL channel. This is Co-chaperonin GroES from Thermoanaerobacter pseudethanolicus (strain ATCC 33223 / 39E) (Clostridium thermohydrosulfuricum).